We begin with the raw amino-acid sequence, 265 residues long: 2-amino-3,7-dideoxy-D-threo-hept-6-ulosonate synthase (265 aa).

Asp25 (proton acceptor) is an active-site residue. 1-deoxy-D-threo-hexo-2,5-diulose 6-phosphate-binding positions include 25-29 (DHGIT) and 144-146 (YAR). Tyr144 acts as the Proton donor in catalysis. Catalysis depends on Lys174, which acts as the Schiff-base intermediate with substrate. 1-deoxy-D-threo-hexo-2,5-diulose 6-phosphate contacts are provided by residues 199 to 200 (GG) and 226 to 227 (GR).

It belongs to the DeoC/FbaB aldolase family. ADHS subfamily. Homodecamer.

The catalysed reaction is 1-deoxy-D-threo-hexo-2,5-diulose 6-phosphate + L-aspartate 4-semialdehyde = 2,3-dioxopropyl phosphate + 2-amino-2,3,7-trideoxy-D-lyxo-hept-6-ulosonate. Its function is as follows. Catalyzes a transaldol reaction between 6-deoxy-5-ketofructose 1-phosphate (DKFP) and L-aspartate semialdehyde (ASA) with an elimination of hydroxypyruvaldehyde phosphate to yield 2-amino-3,7-dideoxy-D-threo-hept-6-ulosonate (ADH). Plays a key role in an alternative pathway of the biosynthesis of 3-dehydroquinate (DHQ), which is involved in the canonical pathway for the biosynthesis of aromatic amino acids. This chain is 2-amino-3,7-dideoxy-D-threo-hept-6-ulosonate synthase, found in Halobacterium salinarum (strain ATCC 700922 / JCM 11081 / NRC-1) (Halobacterium halobium).